We begin with the raw amino-acid sequence, 785 residues long: Hyperosmolality-gated Ca2+ permeable channel 1.7 (785 aa).

The helical transmembrane segment at 7–27 (IGLSAAINLLSAFAFLFAFAM) threads the bilayer. Residue Ser54 is modified to Phosphoserine. The next 9 membrane-spanning stretches (helical) occupy residues 101 to 121 (IYLLGLKMFVPITLLAFGVLV), 156 to 176 (FWAHITMTYVITFWTCYILYM), 373 to 393 (LLTTVALFFLIFCFMIPIAFV), 425 to 445 (FLPGIALKIFLIILPTILMTM), 465 to 485 (YFWFIIVNVFLGSIITGTAFQ), 510 to 530 (ATFFITYIMVDGWAGIAAEIL), 582 to 602 (AVAPILLPFIIVFFAFAYVVF), 628 to 648 (LIICLIISQLLMMGLLSTKKF), and 651 to 671 (VTALLLPQPILTFWFYRYCAG). The segment at 725–761 (VDEEESNPLVRTKRTSQGTTRYNSEASSSATTTPVAN) is disordered. The segment covering 739-761 (TSQGTTRYNSEASSSATTTPVAN) has biased composition (polar residues).

The protein belongs to the CSC1 (TC 1.A.17) family. Phosphorylated and activated by BIK1.

The protein localises to the membrane. It catalyses the reaction Ca(2+)(in) = Ca(2+)(out). In terms of biological role, calcium-permeable channel involved in plant stomatal immunity. In Arabidopsis thaliana (Mouse-ear cress), this protein is Hyperosmolality-gated Ca2+ permeable channel 1.7.